The chain runs to 464 residues: Glutamate decarboxylase beta (464 aa).

N6-(pyridoxal phosphate)lysine is present on lysine 275.

Belongs to the group II decarboxylase family. Pyridoxal 5'-phosphate is required as a cofactor.

It catalyses the reaction L-glutamate + H(+) = 4-aminobutanoate + CO2. Converts internalized glutamate to GABA and increases the internal pH. Involved in glutamate-dependent acid resistance in gastric fluid. The chain is Glutamate decarboxylase beta (gadB) from Listeria innocua serovar 6a (strain ATCC BAA-680 / CLIP 11262).